The primary structure comprises 250 residues: 5-oxoprolinase subunit A (250 aa).

Belongs to the LamB/PxpA family. In terms of assembly, forms a complex composed of PxpA, PxpB and PxpC.

It catalyses the reaction 5-oxo-L-proline + ATP + 2 H2O = L-glutamate + ADP + phosphate + H(+). Its function is as follows. Catalyzes the cleavage of 5-oxoproline to form L-glutamate coupled to the hydrolysis of ATP to ADP and inorganic phosphate. The chain is 5-oxoprolinase subunit A from Klebsiella pneumoniae (strain 342).